The following is a 146-amino-acid chain: PTS system fructose-specific EIIA component (146 aa).

Residues 1 to 124 (MISVIISGHG…NLKAMSQQSF (124 aa)) enclose the PTS EIIA type-4 domain. The active-site Tele-phosphohistidine intermediate is His-9. The residue at position 9 (His-9) is a Phosphohistidine; by HPr.

Its subcellular location is the cytoplasm. The phosphoenolpyruvate-dependent sugar phosphotransferase system (sugar PTS), a major carbohydrate active transport system, catalyzes the phosphorylation of incoming sugar substrates concomitantly with their translocation across the cell membrane. The enzyme II LevDE PTS system is involved in fructose transport. Its function is as follows. LevD and LevE act as negative regulators of the levanase operon. They may be involved in a PTS-mediated phosphorylation of a regulator. The polypeptide is PTS system fructose-specific EIIA component (Bacillus subtilis (strain 168)).